The sequence spans 318 residues: 26 kDa endochitinase 1 (318 aa).

Positions 1-19 (MRAFVLFAVVAMAATMAVA) are cleaved as a signal peptide. The Chitin-binding type-1 domain maps to 20–59 (EQCGSQAGGATCPNCLCCSRFGWCGSTPYCGDGCQSQCSG). 7 cysteine pairs are disulfide-bonded: Cys-22–Cys-37, Cys-31–Cys-43, Cys-36–Cys-49, Cys-53–Cys-57, Cys-98–Cys-160, Cys-172–Cys-180, and Cys-279–Cys-311. Glu-142 (proton donor) is an active-site residue.

It belongs to the glycosyl hydrolase 19 family. Chitinase class I subfamily.

It carries out the reaction Random endo-hydrolysis of N-acetyl-beta-D-glucosaminide (1-&gt;4)-beta-linkages in chitin and chitodextrins.. Its function is as follows. Defense against chitin-containing fungal pathogens. This chain is 26 kDa endochitinase 1, found in Hordeum vulgare (Barley).